A 399-amino-acid polypeptide reads, in one-letter code: 4-hydroxy-3-methylbut-2-enyl diphosphate reductase (399 aa).

Cysteine 66 is a binding site for [4Fe-4S] cluster. Histidine 96 provides a ligand contact to (2E)-4-hydroxy-3-methylbut-2-enyl diphosphate. Residue histidine 96 participates in dimethylallyl diphosphate binding. Residue histidine 96 coordinates isopentenyl diphosphate. [4Fe-4S] cluster is bound at residue cysteine 157. Histidine 185 is a binding site for (2E)-4-hydroxy-3-methylbut-2-enyl diphosphate. A dimethylallyl diphosphate-binding site is contributed by histidine 185. Histidine 185 lines the isopentenyl diphosphate pocket. The Proton donor role is filled by glutamate 187. Position 250 (threonine 250) interacts with (2E)-4-hydroxy-3-methylbut-2-enyl diphosphate. Position 288 (cysteine 288) interacts with [4Fe-4S] cluster. The (2E)-4-hydroxy-3-methylbut-2-enyl diphosphate site is built by serine 317, serine 318, asparagine 319, and serine 380. Dimethylallyl diphosphate contacts are provided by serine 317, serine 318, asparagine 319, and serine 380. Serine 317, serine 318, asparagine 319, and serine 380 together coordinate isopentenyl diphosphate.

It belongs to the IspH family. It depends on [4Fe-4S] cluster as a cofactor.

The enzyme catalyses isopentenyl diphosphate + 2 oxidized [2Fe-2S]-[ferredoxin] + H2O = (2E)-4-hydroxy-3-methylbut-2-enyl diphosphate + 2 reduced [2Fe-2S]-[ferredoxin] + 2 H(+). The catalysed reaction is dimethylallyl diphosphate + 2 oxidized [2Fe-2S]-[ferredoxin] + H2O = (2E)-4-hydroxy-3-methylbut-2-enyl diphosphate + 2 reduced [2Fe-2S]-[ferredoxin] + 2 H(+). Its pathway is isoprenoid biosynthesis; dimethylallyl diphosphate biosynthesis; dimethylallyl diphosphate from (2E)-4-hydroxy-3-methylbutenyl diphosphate: step 1/1. It participates in isoprenoid biosynthesis; isopentenyl diphosphate biosynthesis via DXP pathway; isopentenyl diphosphate from 1-deoxy-D-xylulose 5-phosphate: step 6/6. Catalyzes the conversion of 1-hydroxy-2-methyl-2-(E)-butenyl 4-diphosphate (HMBPP) into a mixture of isopentenyl diphosphate (IPP) and dimethylallyl diphosphate (DMAPP). Acts in the terminal step of the DOXP/MEP pathway for isoprenoid precursor biosynthesis. The polypeptide is 4-hydroxy-3-methylbut-2-enyl diphosphate reductase (Parasynechococcus marenigrum (strain WH8102)).